The following is a 505-amino-acid chain: ATP synthase subunit alpha, cyanelle (505 aa).

170–177 (GDRQTGKT) is an ATP binding site.

It belongs to the ATPase alpha/beta chains family. In terms of assembly, F-type ATPases have 2 components, CF(1) - the catalytic core - and CF(0) - the membrane proton channel. CF(1) has five subunits: alpha(3), beta(3), gamma(1), delta(1), epsilon(1). CF(0) has four main subunits: a, b, b' and c.

The protein resides in the plastid. It localises to the cyanelle thylakoid membrane. It catalyses the reaction ATP + H2O + 4 H(+)(in) = ADP + phosphate + 5 H(+)(out). In terms of biological role, produces ATP from ADP in the presence of a proton gradient across the membrane. The alpha chain is a regulatory subunit. This Cyanophora paradoxa protein is ATP synthase subunit alpha, cyanelle.